The chain runs to 208 residues: Redox-sensing transcriptional repressor Rex (208 aa).

Positions 16–55 form a DNA-binding region, H-T-H motif; the sequence is VYSRYLENLYRKGITTVSSADIAQGVGVTSAQVRKDLAYF. Position 90–95 (90–95) interacts with NAD(+); sequence GAGNLG.

The protein belongs to the transcriptional regulatory Rex family. Homodimer.

It localises to the cytoplasm. In terms of biological role, modulates transcription in response to changes in cellular NADH/NAD(+) redox state. The protein is Redox-sensing transcriptional repressor Rex of Carboxydothermus hydrogenoformans (strain ATCC BAA-161 / DSM 6008 / Z-2901).